Consider the following 215-residue polypeptide: MKYELTATEARVIGCLLEKQVTTPEQYPLSVNGVVTACNQKTNREPVMNLTEQEVQEQLDNLVKRHFLRTVSGFGNRVTKYEQRFCNSEFGDLKLSAAEVALVTTLLLRGAQTPGELRSRASRMHEFSDMTEVESTLERLASREDGPYVVRLAREPGKRESRYMHLFCGDVDELSLQTSAPESASGDLQSRVEALESEVAELKQRLDSLLAHLGE.

This sequence belongs to the UPF0502 family.

This is UPF0502 protein YceH from Salmonella heidelberg (strain SL476).